Here is a 369-residue protein sequence, read N- to C-terminus: Anhydro-N-acetylmuramic acid kinase (369 aa).

12-19 (GTSLDGVD) is an ATP binding site.

It belongs to the anhydro-N-acetylmuramic acid kinase family.

The catalysed reaction is 1,6-anhydro-N-acetyl-beta-muramate + ATP + H2O = N-acetyl-D-muramate 6-phosphate + ADP + H(+). Its pathway is amino-sugar metabolism; 1,6-anhydro-N-acetylmuramate degradation. The protein operates within cell wall biogenesis; peptidoglycan recycling. Functionally, catalyzes the specific phosphorylation of 1,6-anhydro-N-acetylmuramic acid (anhMurNAc) with the simultaneous cleavage of the 1,6-anhydro ring, generating MurNAc-6-P. Is required for the utilization of anhMurNAc either imported from the medium or derived from its own cell wall murein, and thus plays a role in cell wall recycling. The protein is Anhydro-N-acetylmuramic acid kinase of Escherichia coli O7:K1 (strain IAI39 / ExPEC).